A 354-amino-acid chain; its full sequence is Cysteine proteinase A (354 aa).

The N-terminal stretch at Met-1–Ala-24 is a signal peptide. Residues Leu-25–Ser-125 constitute a propeptide, activation peptide. 3 cysteine pairs are disulfide-bonded: Cys-150–Cys-191, Cys-184–Cys-229, and Cys-282–Cys-330. The active site involves Cys-153. Residue Asn-208 is glycosylated (N-linked (GlcNAc...) asparagine). Active-site residues include His-289 and Asn-309.

This sequence belongs to the peptidase C1 family.

The polypeptide is Cysteine proteinase A (LMCPA) (Leishmania mexicana).